A 330-amino-acid chain; its full sequence is Sulfate/thiosulfate import ATP-binding protein CysA (330 aa).

An ABC transporter domain is found at 3–237 (IEIRNINKQF…PASEFVYHFL (235 aa)). 35 to 42 (GPSGCGKT) is an ATP binding site.

This sequence belongs to the ABC transporter superfamily. Sulfate/tungstate importer (TC 3.A.1.6) family. The complex is composed of two ATP-binding proteins (CysA), two transmembrane proteins (CysT and CysW) and a solute-binding protein (CysP).

It localises to the cell inner membrane. The catalysed reaction is sulfate(out) + ATP + H2O = sulfate(in) + ADP + phosphate + H(+). The enzyme catalyses thiosulfate(out) + ATP + H2O = thiosulfate(in) + ADP + phosphate + H(+). Functionally, part of the ABC transporter complex CysAWTP involved in sulfate/thiosulfate import. Responsible for energy coupling to the transport system. This is Sulfate/thiosulfate import ATP-binding protein CysA from Pectobacterium atrosepticum (strain SCRI 1043 / ATCC BAA-672) (Erwinia carotovora subsp. atroseptica).